A 428-amino-acid polypeptide reads, in one-letter code: Ribulose bisphosphate carboxylase (428 aa).

K151 (proton acceptor) is an active-site residue. K153 lines the substrate pocket. 3 residues coordinate Mg(2+): K177, D179, and E180. Position 177 is an N6-carboxylysine (K177). Catalysis depends on H270, which acts as the Proton acceptor. Substrate-binding positions include R271, H303, 354 to 356 (SGG), and 376 to 379 (QFGG).

Belongs to the RuBisCO large chain family. Type III subfamily. In terms of assembly, homodimer. In contrast to form I RuBisCO, the form III RuBisCO is composed solely of large subunits. Requires Mg(2+) as cofactor.

It carries out the reaction 2 (2R)-3-phosphoglycerate + 2 H(+) = D-ribulose 1,5-bisphosphate + CO2 + H2O. It catalyses the reaction D-ribulose 1,5-bisphosphate + O2 = 2-phosphoglycolate + (2R)-3-phosphoglycerate + 2 H(+). Reversibly inhibited by O(2). Catalyzes the addition of molecular CO(2) and H(2)O to ribulose 1,5-bisphosphate (RuBP), generating two molecules of 3-phosphoglycerate (3-PGA). Functions in an archaeal AMP degradation pathway, together with AMP phosphorylase and R15P isomerase. The chain is Ribulose bisphosphate carboxylase from Methanosarcina acetivorans (strain ATCC 35395 / DSM 2834 / JCM 12185 / C2A).